The primary structure comprises 671 residues: Transcriptional regulator Kaiso (671 aa).

The tract at residues 1-103 is interaction with NCOR1; sequence MESRKLISAT…RADLLDELIK (103 aa). Positions 1–136 are self-association; the sequence is MESRKLISAT…SGTEQDGTAE (136 aa). Residues 32–94 enclose the BTB domain; the sequence is CDVTVIVEDR…IYSSKVVRVR (63 aa). The span at 127 to 144 shows a compositional bias: polar residues; the sequence is SGTEQDGTAETLPSSSSD. The tract at residues 127–161 is disordered; sequence SGTEQDGTAETLPSSSSDKSLDMEKSKDEAQDNGA. Positions 145–156 are enriched in basic and acidic residues; the sequence is KSLDMEKSKDEA. Residues Lys-151 and Lys-153 each participate in a glycyl lysine isopeptide (Lys-Gly) (interchain with G-Cter in SUMO2) cross-link. Thr-251 carries the post-translational modification Phosphothreonine. The segment at 298–571 is interaction with CBFA2T3; the sequence is LPNHMSSSVN…FMSSHIKSVH (274 aa). Positions 332 to 365 are disordered; the sequence is IIDDDDDIISSSPDSAVSNTSLVPQADNSKSTTL. The segment covering 347 to 365 has biased composition (polar residues); that stretch reads AVSNTSLVPQADNSKSTTL. Glycyl lysine isopeptide (Lys-Gly) (interchain with G-Cter in SUMO2) cross-links involve residues Lys-388, Lys-405, Lys-412, and Lys-447. The span at 451-461 shows a compositional bias: basic and acidic residues; sequence DGGEAKLDNEL. Positions 451-474 are disordered; it reads DGGEAKLDNELPKTSGSEPPNKRM. Residues 452 to 671 are interaction with CTNND1; it reads GGEAKLDNEL…EFEFIIPESY (220 aa). Residues Lys-463, Lys-472, and Lys-477 each participate in a glycyl lysine isopeptide (Lys-Gly) (interchain with G-Cter in SUMO2) cross-link. Positions 469–478 match the Nuclear localization signal motif; it reads PPNKRMKVKH. 3 consecutive C2H2-type zinc fingers follow at residues 492–514, 520–542, and 548–571; these read YICIVCKRSYVCLTSLRRHFNIH, YQCRYCDKVFPLAEYRTKHEIHH, and YQCLTCGKSFINYQFMSSHIKSVH. Residues 512 to 637 form a required for DNA-binding region; that stretch reads NIHSWEKKYQ…TSTPPQNKST (126 aa). Glycyl lysine isopeptide (Lys-Gly) (interchain with G-Cter in SUMO2) cross-links involve residues Lys-537, Lys-568, Lys-580, Lys-609, and Lys-616.

Interacts with NCOR1. Self-associates. Interacts with CTNND1, and this interaction inhibits binding to both methylated and non-methylated DNA. Interacts with CTNND2. Interacts with KPNA2/RCH1, which may mediate nuclear import of this protein. Interacts with CBFA2T3. Expressed in brain, heart, kidney, liver, lung, neuromuscular junctions, skeletal muscle, spleen and testis.

The protein resides in the nucleus. Functionally, transcriptional regulator with bimodal DNA-binding specificity. Binds to methylated CpG dinucleotides in the consensus sequence 5'-CGCG-3' and also binds to the non-methylated consensus sequence 5'-CTGCNA-3' also known as the consensus kaiso binding site (KBS). May recruit the N-CoR repressor complex to promote histone deacetylation and the formation of repressive chromatin structures in target gene promoters. Contributes to the repression of target genes of the Wnt signaling pathway. May also activate transcription of a subset of target genes by the recruitment of CTNND2. Represses expression of MMP7 in conjunction with transcriptional corepressors CBFA2T3, CBFA2T2 and RUNX1T1. This is Transcriptional regulator Kaiso (Zbtb33) from Mus musculus (Mouse).